The sequence spans 374 residues: Calcium/calmodulin-dependent protein kinase type 1 (374 aa).

The region spanning 20–276 (YDFRDVLGTG…CEQALQHPWI (257 aa)) is the Protein kinase domain. ATP is bound by residues 26 to 34 (LGTGAFSEV) and K49. K59 is covalently cross-linked (Glycyl lysine isopeptide (Lys-Gly) (interchain with G-Cter in ubiquitin)). The Proton acceptor role is filled by D141. Residue T177 is modified to Phosphothreonine; by CaMKK1 and CaMKK2. The short motif at 263-264 (KR) is the Involved in nuclear import element. Residues 276-316 (IAGDTALDKNIHQSVSEQIKKNFAKSKWKQAFNATAVVRHM) are autoinhibitory domain. The segment at 296-317 (KNFAKSKWKQAFNATAVVRHMR) is calmodulin-binding. The Nuclear export signal signature appears at 315–321 (HMRKLQL).

Belongs to the protein kinase superfamily. CAMK Ser/Thr protein kinase family. CaMK subfamily. Monomer. Interacts with XPO1. Post-translationally, phosphorylated by CaMKK1 and CaMKK2 on Thr-177. In terms of processing, polybiquitinated by the E3 ubiquitin-protein ligase complex SCF(FBXL12), leading to proteasomal degradation. As to expression, widely expressed.

The protein localises to the cytoplasm. The protein resides in the nucleus. It carries out the reaction L-seryl-[protein] + ATP = O-phospho-L-seryl-[protein] + ADP + H(+). The catalysed reaction is L-threonyl-[protein] + ATP = O-phospho-L-threonyl-[protein] + ADP + H(+). Its activity is regulated as follows. Activated by Ca(2+)/calmodulin. Binding of calmodulin results in conformational change that relieves intrasteric autoinhibition and allows phosphorylation of Thr-177 within the activation loop by CaMKK1 or CaMKK2. Phosphorylation of Thr-177 results in several fold increase in total activity. Unlike CaMK4, is unable to exhibit autonomous activity after Ca(2+)/calmodulin activation. Calcium/calmodulin-dependent protein kinase that operates in the calcium-triggered CaMKK-CaMK1 signaling cascade and, upon calcium influx, regulates transcription activators activity, cell cycle, hormone production, cell differentiation, actin filament organization and neurite outgrowth. Recognizes the substrate consensus sequence [MVLIF]-x-R-x(2)-[ST]-x(3)-[MVLIF]. Regulates axonal extension and growth cone motility in hippocampal and cerebellar nerve cells. Upon NMDA receptor-mediated Ca(2+) elevation, promotes dendritic growth in hippocampal neurons and is essential in synapses for full long-term potentiation (LTP) and ERK2-dependent translational activation. Downstream of NMDA receptors, promotes the formation of spines and synapses in hippocampal neurons by phosphorylating ARHGEF7/BETAPIX on 'Ser-516', which results in the enhancement of ARHGEF7 activity and activation of RAC1. Promotes neuronal differentiation and neurite outgrowth by activation and phosphorylation of MARK2 on 'Ser-91', 'Ser-92', 'Ser-93' and 'Ser-294'. Promotes nuclear export of HDAC5 and binding to 14-3-3 by phosphorylation of 'Ser-259' and 'Ser-498' in the regulation of muscle cell differentiation. Regulates NUMB-mediated endocytosis by phosphorylation of NUMB on 'Ser-275' and 'Ser-294'. Involved in the regulation of basal and estrogen-stimulated migration of medulloblastoma cells through ARHGEF7/BETAPIX phosphorylation. Is required for proper activation of cyclin-D1/CDK4 complex during G1 progression in diploid fibroblasts. Plays a role in K(+) and ANG2-mediated regulation of the aldosterone synthase (CYP11B2) to produce aldosterone in the adrenal cortex. Phosphorylates EIF4G3/eIF4GII. In vitro phosphorylates CREB1, ATF1, CFTR, MYL9 and SYN1/synapsin I. In Rattus norvegicus (Rat), this protein is Calcium/calmodulin-dependent protein kinase type 1 (Camk1).